A 427-amino-acid chain; its full sequence is L-cysteine:1D-myo-inositol 2-amino-2-deoxy-alpha-D-glucopyranoside ligase (427 aa).

A Zn(2+)-binding site is contributed by Cys46. Residues 46 to 49 (CGIT), Thr61, and 84 to 86 (NVT) contribute to the L-cysteinyl-5'-AMP site. A 'HIGH' region motif is present at residues 48–58 (ITPYDATHMGH). The 'ERGGDP' region signature appears at 186-191 (ERGGDP). Trp233 is an L-cysteinyl-5'-AMP binding site. Cys237 serves as a coordination point for Zn(2+). 255-257 (GSD) contributes to the L-cysteinyl-5'-AMP binding site. His262 contributes to the Zn(2+) binding site. Val289 lines the L-cysteinyl-5'-AMP pocket. Positions 295-299 (KMSKS) match the 'KMSKS' region motif.

Belongs to the class-I aminoacyl-tRNA synthetase family. MshC subfamily. As to quaternary structure, monomer. Zn(2+) is required as a cofactor.

It catalyses the reaction 1D-myo-inositol 2-amino-2-deoxy-alpha-D-glucopyranoside + L-cysteine + ATP = 1D-myo-inositol 2-(L-cysteinylamino)-2-deoxy-alpha-D-glucopyranoside + AMP + diphosphate + H(+). Catalyzes the ATP-dependent condensation of GlcN-Ins and L-cysteine to form L-Cys-GlcN-Ins. The sequence is that of L-cysteine:1D-myo-inositol 2-amino-2-deoxy-alpha-D-glucopyranoside ligase from Catenulispora acidiphila (strain DSM 44928 / JCM 14897 / NBRC 102108 / NRRL B-24433 / ID139908).